We begin with the raw amino-acid sequence, 477 residues long: Enolase 1, chloroplastic (477 aa).

The N-terminal 41 residues, 1–41 (MALTTKPHHLQRSFLSPSRVSGERYLESAPSCLRFRRSGVQ), are a transit peptide targeting the chloroplast. Residues His203 and Glu212 each contribute to the substrate site. Glu255 serves as the catalytic Proton donor. Residues Asp290, Glu340, and Asp365 each contribute to the Mg(2+) site. Substrate contacts are provided by Glu340 and Asp365. Lys390 (proton acceptor) is an active-site residue. Substrate contacts are provided by residues 417-420 (SHRS) and Lys441. Ser476 is modified (phosphoserine).

This sequence belongs to the enolase family. Requires Mg(2+) as cofactor. In terms of tissue distribution, highly expressed in young roots, young siliques, and shoot apex. Lowly expressed in young leaves, stems and cotyledons.

Its subcellular location is the plastid. The protein resides in the chloroplast. The catalysed reaction is (2R)-2-phosphoglycerate = phosphoenolpyruvate + H2O. The protein operates within carbohydrate degradation; glycolysis; pyruvate from D-glyceraldehyde 3-phosphate: step 4/5. This chain is Enolase 1, chloroplastic (ENO1), found in Arabidopsis thaliana (Mouse-ear cress).